The following is a 329-amino-acid chain: Beta-tectorin (329 aa).

The N-terminal stretch at 1–17 is a signal peptide; the sequence is MVAVTVYLMVILAQAFA. In terms of domain architecture, ZP spans 19–287; sequence PCTPNKADVI…VTCDKRKQRM (269 aa). N-linked (GlcNAc...) asparagine glycosylation is found at asparagine 80, asparagine 104, asparagine 116, and asparagine 145. The cysteines at positions 204 and 264 are disulfide-linked. A lipid anchor (GPI-anchor amidated glycine) is attached at glycine 304. The propeptide at 305–329 is removed in mature form; the sequence is LSRFYMLSDVIFHLLFAIGFCAILL.

As to quaternary structure, may form homomeric filament after self-association or heteromeric filament after association with alpha-tectorin. In terms of processing, the N-terminus is blocked. N-glycosylated. Post-translationally, the presence of a hydrophobic C-terminus preceded by a potential cleavage site strongly suggests that tectorins are synthesized as glycosylphosphatidylinositol-linked, membrane-bound precursors. Tectorins are targeted to the apical surface of the inner ear epithelia by the lipid and proteolytically released into the extracellular compartment. In terms of tissue distribution, exclusively expressed in the inner ear, where it is found in basilar papilla, clear cells, supporting cells, cuboidal cells and the lagena macula.

It localises to the cell membrane. The protein resides in the secreted. The protein localises to the extracellular space. Its subcellular location is the extracellular matrix. In terms of biological role, one of the major non-collagenous components of the tectorial membrane. The tectorial membrane is an extracellular matrix of the inner ear that covers the neuroepithelium of the cochlea and contacts the stereocilia bundles of specialized sensory hair cells. Sound induces movement of these hair cells relative to the tectorial membrane, deflects the stereocilia and leads to fluctuations in hair-cell membrane potential, transducing sound into electrical signals. The polypeptide is Beta-tectorin (TECTB) (Gallus gallus (Chicken)).